The sequence spans 139 residues: Ribonuclease P protein component (139 aa).

The tract at residues 120 to 139 is disordered; sequence KPTTGVEYSPKNEKCESVLP. Over residues 129–139 the composition is skewed to basic and acidic residues; that stretch reads PKNEKCESVLP.

The protein belongs to the RnpA family. As to quaternary structure, consists of a catalytic RNA component (M1 or rnpB) and a protein subunit.

The catalysed reaction is Endonucleolytic cleavage of RNA, removing 5'-extranucleotides from tRNA precursor.. Functionally, RNaseP catalyzes the removal of the 5'-leader sequence from pre-tRNA to produce the mature 5'-terminus. It can also cleave other RNA substrates such as 4.5S RNA. The protein component plays an auxiliary but essential role in vivo by binding to the 5'-leader sequence and broadening the substrate specificity of the ribozyme. This Chlamydia caviae (strain ATCC VR-813 / DSM 19441 / 03DC25 / GPIC) (Chlamydophila caviae) protein is Ribonuclease P protein component.